Reading from the N-terminus, the 293-residue chain is 33 kDa chaperonin (293 aa).

Cystine bridges form between cysteine 236/cysteine 238 and cysteine 269/cysteine 272.

Belongs to the HSP33 family. Post-translationally, under oxidizing conditions two disulfide bonds are formed involving the reactive cysteines. Under reducing conditions zinc is bound to the reactive cysteines and the protein is inactive.

The protein resides in the cytoplasm. Functionally, redox regulated molecular chaperone. Protects both thermally unfolding and oxidatively damaged proteins from irreversible aggregation. Plays an important role in the bacterial defense system toward oxidative stress. The polypeptide is 33 kDa chaperonin (Lactobacillus delbrueckii subsp. bulgaricus (strain ATCC BAA-365 / Lb-18)).